The chain runs to 309 residues: Ribonuclease Z (309 aa).

Zn(2+) contacts are provided by H63, H65, D67, H68, H145, D216, and H274. The Proton acceptor role is filled by D67.

Belongs to the RNase Z family. In terms of assembly, homodimer. Requires Zn(2+) as cofactor.

The catalysed reaction is Endonucleolytic cleavage of RNA, removing extra 3' nucleotides from tRNA precursor, generating 3' termini of tRNAs. A 3'-hydroxy group is left at the tRNA terminus and a 5'-phosphoryl group is left at the trailer molecule.. Functionally, zinc phosphodiesterase, which displays some tRNA 3'-processing endonuclease activity. Probably involved in tRNA maturation, by removing a 3'-trailer from precursor tRNA. The chain is Ribonuclease Z from Streptococcus agalactiae serotype V (strain ATCC BAA-611 / 2603 V/R).